Here is a 416-residue protein sequence, read N- to C-terminus: ORC1-type DNA replication protein 9 (416 aa).

ATP-binding positions include 79-83 (SGKSL), Tyr226, and Arg238.

The protein belongs to the CDC6/cdc18 family.

Its function is as follows. Involved in regulation of DNA replication. The protein is ORC1-type DNA replication protein 9 (cdc6i) of Haloarcula marismortui (strain ATCC 43049 / DSM 3752 / JCM 8966 / VKM B-1809) (Halobacterium marismortui).